We begin with the raw amino-acid sequence, 203 residues long: Large ribosomal subunit protein bL25 (203 aa).

It belongs to the bacterial ribosomal protein bL25 family. CTC subfamily. In terms of assembly, part of the 50S ribosomal subunit; part of the 5S rRNA/L5/L18/L25 subcomplex. Contacts the 5S rRNA. Binds to the 5S rRNA independently of L5 and L18.

Its function is as follows. This is one of the proteins that binds to the 5S RNA in the ribosome where it forms part of the central protuberance. The protein is Large ribosomal subunit protein bL25 of Rickettsia typhi (strain ATCC VR-144 / Wilmington).